A 1083-amino-acid chain; its full sequence is Ubiquitin carboxyl-terminal hydrolase 28 (1083 aa).

Residues 60–82 (DQRVKEPSHDTAATEPSEVEESA) are disordered. Serine 67 carries the phosphoserine modification. The UIM domain occupies 97–116 (DNKDDLQAAIALSLLESPNI). Residue lysine 99 forms a Glycyl lysine isopeptide (Lys-Gly) (interchain with G-Cter in SUMO2) linkage. Positions 162 to 656 (VGLKNVGNTC…SAYCLMYIND (495 aa)) constitute a USP domain. Cysteine 171 serves as the catalytic Nucleophile. A Phosphoserine modification is found at serine 376. Positions 483-539 (DLTAKESSSPKSCSQNAEGSFSSPEDALPNSEVMNGPFTSPHSSLEMPAPPPAPRTV) are disordered. A compositionally biased stretch (polar residues) spans 487-505 (KESSSPKSCSQNAEGSFSS). Serine 556 is modified (phosphoserine). Histidine 606 functions as the Proton acceptor in the catalytic mechanism. The interval 703–728 (EEQSCKIPQMESSPNSSSQDFSTSQE) is disordered. A compositionally biased stretch (low complexity) spans 714–728 (SSPNSSSQDFSTSQE). The residue at position 720 (serine 720) is a Phosphoserine. Residue threonine 1054 is modified to Phosphothreonine.

The protein belongs to the peptidase C19 family. USP28 subfamily. In terms of assembly, interacts with ZNF304. Interacts with PRKD1. Interacts with TP53BP1. Interacts with FBXW7; following DNA damage, dissociates from FBXW7 leading to degradation of MYC. Post-translationally, degraded upon nickel ion level or hypoxia exposure. Phosphorylated upon DNA damage at Ser-67 and Ser-720, by ATM or ATR. Phosphorylated by PRKD1.

The protein resides in the nucleus. It is found in the nucleoplasm. It catalyses the reaction Thiol-dependent hydrolysis of ester, thioester, amide, peptide and isopeptide bonds formed by the C-terminal Gly of ubiquitin (a 76-residue protein attached to proteins as an intracellular targeting signal).. Deubiquitinase involved in DNA damage response checkpoint and MYC proto-oncogene stability. Involved in DNA damage induced apoptosis by specifically deubiquitinating proteins of the DNA damage pathway such as CLSPN. Also involved in G2 DNA damage checkpoint, by deubiquitinating CLSPN, and preventing its degradation by the anaphase promoting complex/cyclosome (APC/C). In contrast, it does not deubiquitinate PLK1. Specifically deubiquitinates MYC in the nucleoplasm, leading to prevent MYC degradation by the proteasome: acts by specifically interacting with FBXW7 (FBW7alpha) in the nucleoplasm and counteracting ubiquitination of MYC by the SCF(FBXW7) complex. Deubiquitinates ZNF304, hence preventing ZNF304 degradation by the proteasome and leading to the activated KRAS-mediated promoter hypermethylation and transcriptional silencing of tumor suppressor genes (TSGs) in a subset of colorectal cancers (CRC) cells. This Rattus norvegicus (Rat) protein is Ubiquitin carboxyl-terminal hydrolase 28 (Usp28).